Here is a 49-residue protein sequence, read N- to C-terminus: Sporulation protein YjcZ (49 aa).

A helical transmembrane segment spans residues 29-49 (STFVLLVVLFILLIIVGASFF).

The protein belongs to the SscA family.

Its subcellular location is the membrane. This chain is Sporulation protein YjcZ (yjcZ), found in Bacillus subtilis (strain 168).